A 520-amino-acid polypeptide reads, in one-letter code: Probable cytochrome P450 4p2 (520 aa).

Residues Glu-325 and Cys-464 each coordinate heme.

The protein belongs to the cytochrome P450 family. The cofactor is heme.

It localises to the endoplasmic reticulum membrane. The protein resides in the microsome membrane. Its function is as follows. May be involved in the metabolism of insect hormones and in the breakdown of synthetic insecticides. The chain is Probable cytochrome P450 4p2 (Cyp4p2) from Drosophila melanogaster (Fruit fly).